The chain runs to 257 residues: Imidazole glycerol phosphate synthase subunit HisF (257 aa).

Active-site residues include Asp-12 and Asp-131.

Belongs to the HisA/HisF family. In terms of assembly, heterodimer of HisH and HisF.

The protein resides in the cytoplasm. The catalysed reaction is 5-[(5-phospho-1-deoxy-D-ribulos-1-ylimino)methylamino]-1-(5-phospho-beta-D-ribosyl)imidazole-4-carboxamide + L-glutamine = D-erythro-1-(imidazol-4-yl)glycerol 3-phosphate + 5-amino-1-(5-phospho-beta-D-ribosyl)imidazole-4-carboxamide + L-glutamate + H(+). The protein operates within amino-acid biosynthesis; L-histidine biosynthesis; L-histidine from 5-phospho-alpha-D-ribose 1-diphosphate: step 5/9. IGPS catalyzes the conversion of PRFAR and glutamine to IGP, AICAR and glutamate. The HisF subunit catalyzes the cyclization activity that produces IGP and AICAR from PRFAR using the ammonia provided by the HisH subunit. The sequence is that of Imidazole glycerol phosphate synthase subunit HisF from Rhodococcus jostii (strain RHA1).